The primary structure comprises 331 residues: T-cell acute lymphocytic leukemia protein 1 (331 aa).

Residues 1 to 22 are compositionally biased toward basic and acidic residues; that stretch reads MTERPPSEAARSDPQLEGRDAA. Disordered regions lie at residues 1–27 and 40–86; these read MTER…ASMA and ETSR…EARH. Ser-12 is subject to Phosphoserine. Residues 56-70 show a composition bias toward gly residues; the sequence is ARGGPGGGPAGGGGA. A compositionally biased stretch (basic and acidic residues) spans 72–86; that stretch reads RDLKGRDAATAEARH. Phosphoserine is present on residues Ser-122 and Ser-172. Residues 187 to 239 form the bHLH domain; that stretch reads VRRIFTNSRERWRQQNVNGAFAELRKLIPTHPPDKKLSKNEILRLAMKYINFL. The segment at 249–331 is disordered; the sequence is EGTQRAKTGK…LPAADGAGPR (83 aa). The span at 263 to 275 shows a compositional bias: gly residues; the sequence is GAGGGGGGGGGGA.

As to quaternary structure, efficient DNA binding requires dimerization with another bHLH protein. Forms heterodimers with TCF3. Binds to the LIM domain containing protein LMO2 and to DRG1. Can assemble in a complex with LDB1 and LMO2. Component of a TAL-1 complex composed at least of CBFA2T3, LDB1, TAL1 and TCF3. Interacts with SBNO2; this interaction inhibits TAL1 occupancy of the DCSTAMP promoter, leading to the activation of the DCSTAMP promoter by the transcription factor MITF. In terms of processing, phosphorylated on serine residues. Phosphorylation of Ser-122 is strongly stimulated by hypoxia. Ubiquitinated; subsequent to hypoxia-dependent phosphorylation of Ser-122, ubiquitination targets the protein for rapid degradation via the ubiquitin system. This process may be characteristic for microvascular endothelial cells, since it could not be observed in large vessel endothelial cells. In terms of tissue distribution, leukemic stem cell.

Its subcellular location is the nucleus. In terms of biological role, implicated in the genesis of hemopoietic malignancies. It may play an important role in hemopoietic differentiation. Serves as a positive regulator of erythroid differentiation. The protein is T-cell acute lymphocytic leukemia protein 1 (TAL1) of Homo sapiens (Human).